Consider the following 142-residue polypeptide: Hemoglobin subunit alpha (142 aa).

Residues 2 to 142 (VLSAADKTNV…LSTVLTSKYR (141 aa)) enclose the Globin domain. Residue Ser-4 is modified to Phosphoserine. At Lys-8 the chain carries N6-succinyllysine. Thr-9 bears the Phosphothreonine mark. An N6-succinyllysine modification is found at Lys-12. Lys-17 is modified (N6-acetyllysine; alternate). Lys-17 is modified (N6-succinyllysine; alternate). Tyr-25 bears the Phosphotyrosine mark. Position 36 is a phosphoserine (Ser-36). Lys-41 carries the post-translational modification N6-succinyllysine. Position 50 is a phosphoserine (Ser-50). An O2-binding site is contributed by Gln-59. Residue His-88 coordinates heme b. Thr-109 is subject to Phosphothreonine. Ser-125 is subject to Phosphoserine. Residues Thr-135 and Thr-138 each carry the phosphothreonine modification. Ser-139 is subject to Phosphoserine.

Belongs to the globin family. Heterotetramer of two alpha chains and two beta chains. As to expression, red blood cells.

Functionally, involved in oxygen transport from the lung to the various peripheral tissues. In terms of biological role, hemopressin acts as an antagonist peptide of the cannabinoid receptor CNR1. Hemopressin-binding efficiently blocks cannabinoid receptor CNR1 and subsequent signaling. The sequence is that of Hemoglobin subunit alpha (HBA) from Monodelphis domestica (Gray short-tailed opossum).